Reading from the N-terminus, the 447-residue chain is Tubulin beta chain (447 aa).

Positions 11, 69, 138, 142, 143, 144, 204, and 226 each coordinate GTP. Glu69 serves as a coordination point for Mg(2+). Residues 424–447 form a disordered region; the sequence is QYQEASVSDAEEEYDEEAPLEGEE. Over residues 432-447 the composition is skewed to acidic residues; sequence DAEEEYDEEAPLEGEE.

This sequence belongs to the tubulin family. In terms of assembly, dimer of alpha and beta chains. A typical microtubule is a hollow water-filled tube with an outer diameter of 25 nm and an inner diameter of 15 nM. Alpha-beta heterodimers associate head-to-tail to form protofilaments running lengthwise along the microtubule wall with the beta-tubulin subunit facing the microtubule plus end conferring a structural polarity. Microtubules usually have 13 protofilaments but different protofilament numbers can be found in some organisms and specialized cells. Requires Mg(2+) as cofactor.

It localises to the cytoplasm. The protein localises to the cytoskeleton. Tubulin is the major constituent of microtubules, a cylinder consisting of laterally associated linear protofilaments composed of alpha- and beta-tubulin heterodimers. Microtubules grow by the addition of GTP-tubulin dimers to the microtubule end, where a stabilizing cap forms. Below the cap, tubulin dimers are in GDP-bound state, owing to GTPase activity of alpha-tubulin. The polypeptide is Tubulin beta chain (TUB1) (Zymoseptoria tritici (Speckled leaf blotch fungus)).